Here is a 1216-residue protein sequence, read N- to C-terminus: SPOC domain-containing protein 1 (1216 aa).

5 disordered regions span residues 1–74, 166–216, 236–325, 348–462, and 511–601; these read MSQA…RAAG, EARD…GAHS, NLLS…PPQS, RTGS…PRLE, and SSPS…QQEK. Positions 36–50 are enriched in low complexity; sequence PGLSPDGPGASSGPG. Positions 177–190 are enriched in basic and acidic residues; sequence CDRRSPTLSKEEPP. Basic residues predominate over residues 204 to 213; that stretch reads RVRKKWRRQG. Residues 266–278 show a composition bias toward gly residues; the sequence is SGPGEPGGSGAGC. A compositionally biased stretch (low complexity) spans 314–325; the sequence is SLSSAAQAPPQS. Basic and acidic residues predominate over residues 436–452; it reads RGTDRSSDNSHQDRPEE. Over residues 581-592 the composition is skewed to acidic residues; sequence EAEEDSLPEQPE. The TFIIS central domain occupies 608 to 728; that stretch reads VRGTVVRSMQ…IIEQQQKEPC (121 aa). The interval 823–850 is disordered; it reads QTPMPAPEMPKTRELSPTEPQDRVPPSG. Residues 832–844 are compositionally biased toward basic and acidic residues; that stretch reads PKTRELSPTEPQD. In terms of domain architecture, SPOC spans 867 to 970; the sequence is WEGVLDMFSI…VEHMGMVLLP (104 aa). Positions 1046–1055 are enriched in basic and acidic residues; that stretch reads RYYQPDDRRP. Disordered stretches follow at residues 1046-1140 and 1176-1216; these read RYYQ…QHFH and PRPL…PRKA.

Interacts with DNMT3A, DNMT3C and DNMT3L. Interacts with C19orf84. Interacts with SPIN1; promoting recruitment to transposons marked with histone H3 trimethylated at both 'Lys-4' and 'Lys-9' (H3K4me3K9me3).

It localises to the nucleus. It is found in the chromosome. Functionally, protein adapter that acts as an essential executor of PIWIL4-piRNA pathway directed transposon DNA methylation and silencing in the male embryonic germ cells. Recruited to young transposons, which are specifically marked with histone H3 trimethylated at both 'Lys-4' and 'Lys-9' (H3K4me3K9me3), via its association with SPIN1 chromatin reader, and associates with the de novo DNA methylation machinery and repressive chromatin remodeling complexes. Following this, PIWIL4 engages with nascent transposable element transcript to direct piRNA-directed DNA methylation. Not required for piRNA biosynthesis. The sequence is that of SPOC domain-containing protein 1 from Homo sapiens (Human).